The chain runs to 101 residues: ATP synthase subunit c (101 aa).

The next 2 helical transmembrane spans lie at 31 to 51 (AFAY…GAGQ) and 81 to 101 (AISE…IFVG).

The protein belongs to the ATPase C chain family. As to quaternary structure, F-type ATPases have 2 components, F(1) - the catalytic core - and F(0) - the membrane proton channel. F(1) has five subunits: alpha(3), beta(3), gamma(1), delta(1), epsilon(1). F(0) has three main subunits: a(1), b(2) and c(10-14). The alpha and beta chains form an alternating ring which encloses part of the gamma chain. F(1) is attached to F(0) by a central stalk formed by the gamma and epsilon chains, while a peripheral stalk is formed by the delta and b chains.

It is found in the cell membrane. In terms of biological role, f(1)F(0) ATP synthase produces ATP from ADP in the presence of a proton or sodium gradient. F-type ATPases consist of two structural domains, F(1) containing the extramembraneous catalytic core and F(0) containing the membrane proton channel, linked together by a central stalk and a peripheral stalk. During catalysis, ATP synthesis in the catalytic domain of F(1) is coupled via a rotary mechanism of the central stalk subunits to proton translocation. Functionally, key component of the F(0) channel; it plays a direct role in translocation across the membrane. A homomeric c-ring of between 10-14 subunits forms the central stalk rotor element with the F(1) delta and epsilon subunits. This Mesomycoplasma hyopneumoniae (strain 7448) (Mycoplasma hyopneumoniae) protein is ATP synthase subunit c.